Here is a 320-residue protein sequence, read N- to C-terminus: Ferrochelatase (320 aa).

Fe cation contacts are provided by His-194 and Glu-275.

The protein belongs to the ferrochelatase family.

Its subcellular location is the cytoplasm. It catalyses the reaction heme b + 2 H(+) = protoporphyrin IX + Fe(2+). The protein operates within porphyrin-containing compound metabolism; protoheme biosynthesis; protoheme from protoporphyrin-IX: step 1/1. Its function is as follows. Catalyzes the ferrous insertion into protoporphyrin IX. This chain is Ferrochelatase, found in Vibrio parahaemolyticus serotype O3:K6 (strain RIMD 2210633).